A 113-amino-acid chain; its full sequence is U11-theraphotoxin-Hhn1n (113 aa).

The N-terminal stretch at 1–21 is a signal peptide; that stretch reads MNTVRVTFLLVFVLAVSLGQA. The propeptide occupies 22 to 74; it reads DKDENRMEMQEKTEQGKSYLDFAENLLLQKLEELEAKLLEEDSEESRNSRQKR. The span at 60–69 shows a compositional bias: basic and acidic residues; that stretch reads LEEDSEESRN. The disordered stretch occupies residues 60 to 83; that stretch reads LEEDSEESRNSRQKRCIGEGVPCD. 2 cysteine pairs are disulfide-bonded: C75/C90 and C89/C110.

The protein belongs to the neurotoxin 14 (magi-1) family. 01 (HNTX-16) subfamily. In terms of tissue distribution, expressed by the venom gland.

Its subcellular location is the secreted. Probable ion channel inhibitor. This is U11-theraphotoxin-Hhn1n from Cyriopagopus hainanus (Chinese bird spider).